The following is a 290-amino-acid chain: Xylanase inhibitor protein 2 (290 aa).

Residues 1–27 (MGLVHALLPFAAAAALLLLAAPPPATA) form the signal peptide. A GH18 domain is found at 30-290 (PGLAVYWGRH…DKKANYTGEG (261 aa)). C49 and C89 are oxidised to a cystine. N-linked (GlcNAc...) asparagine glycosylation occurs at N112. An intrachain disulfide couples C187 to C216. Residue N285 is glycosylated (N-linked (GlcNAc...) asparagine).

The protein belongs to the glycosyl hydrolase 18 family. Xylanase inhibitor subfamily. Binds to fungal GH10 xylanases.

It localises to the secreted. Fungal xylanase inhibitor. Possesses competitive inhibiting activity against several fungal endo-1,4-beta-D-xylanases belonging to glycoside hydrolase family 10 (GH10) and family 11 (GH11). May function in plant defense against secreted fungal pathogen xylanases. Is similar to class III chitinases, but does not exhibit chitinase activity. The chain is Xylanase inhibitor protein 2 from Oryza sativa subsp. japonica (Rice).